The sequence spans 241 residues: Nuclear receptor-interacting protein 3 (241 aa).

The sequence is that of Nuclear receptor-interacting protein 3 (NRIP3) from Homo sapiens (Human).